A 45-amino-acid chain; its full sequence is MKVSSSIKADPSKGDKLVRRKGRLYVINKKDPNRKQRQAGPARKK.

The interval 1 to 45 (MKVSSSIKADPSKGDKLVRRKGRLYVINKKDPNRKQRQAGPARKK) is disordered.

It belongs to the bacterial ribosomal protein bL36 family.

The chain is Large ribosomal subunit protein bL36 from Chlamydia caviae (strain ATCC VR-813 / DSM 19441 / 03DC25 / GPIC) (Chlamydophila caviae).